We begin with the raw amino-acid sequence, 482 residues long: Ubiquitin carboxyl-terminal hydrolase 6 (482 aa).

A Ubiquitin-like domain is found at 2–77 (PTVSVKWQKK…LMMMGTADEI (76 aa)). Residues 104-478 (AGLVNLGNTC…MAYITMYKAR (375 aa)) enclose the USP domain. Catalysis depends on Cys113, which acts as the Nucleophile. A calmodulin-binding region spans residues 172–191 (SQFWMVLRKKYPQFSQLQNG). 2 stretches are compositionally biased toward basic and acidic residues: residues 350–361 (PRQKLREEEGKK) and 371–381 (GSKDSDVKMTD). Positions 350-407 (PRQKLREEEGKKLGLQTSAKSGSKDSDVKMTDAEASANGSGESSTVNPQEGTSSEKET) are disordered. The span at 382 to 393 (AEASANGSGESS) shows a compositional bias: low complexity. His430 functions as the Proton acceptor in the catalytic mechanism.

It belongs to the peptidase C19 family. In terms of assembly, interacts with calmodulin (CaM).

It catalyses the reaction Thiol-dependent hydrolysis of ester, thioester, amide, peptide and isopeptide bonds formed by the C-terminal Gly of ubiquitin (a 76-residue protein attached to proteins as an intracellular targeting signal).. Functionally, recognizes and hydrolyzes the peptide bond at the C-terminal Gly of ubiquitin. Involved in the processing of poly-ubiquitin precursors as well as that of ubiquitinated proteins. This is Ubiquitin carboxyl-terminal hydrolase 6 (UBP6) from Arabidopsis thaliana (Mouse-ear cress).